The following is a 106-amino-acid chain: L-rhamnose mutarotase (106 aa).

Tyrosine 20 contacts substrate. Catalysis depends on histidine 24, which acts as the Proton donor. Substrate-binding positions include tyrosine 43 and 78–79; that span reads WW.

This sequence belongs to the rhamnose mutarotase family. Homodimer.

It is found in the cytoplasm. The catalysed reaction is alpha-L-rhamnose = beta-L-rhamnose. It functions in the pathway carbohydrate degradation; L-rhamnose degradation. Its function is as follows. Involved in the anomeric conversion of L-rhamnose. This Rhizobium leguminosarum bv. trifolii protein is L-rhamnose mutarotase (rhaM).